We begin with the raw amino-acid sequence, 85 residues long: Small ribosomal subunit protein bS20 (85 aa).

Residues 1-25 (MANIKSAIKRAKLSEERRAHNASIK) are disordered.

It belongs to the bacterial ribosomal protein bS20 family.

Its function is as follows. Binds directly to 16S ribosomal RNA. In Bacillus anthracis (strain A0248), this protein is Small ribosomal subunit protein bS20.